The chain runs to 215 residues: Large ribosomal subunit protein uL3 (215 aa).

Gln-156 bears the N5-methylglutamine mark.

This sequence belongs to the universal ribosomal protein uL3 family. As to quaternary structure, part of the 50S ribosomal subunit. Forms a cluster with proteins L14 and L19. Post-translationally, methylated by PrmB.

In terms of biological role, one of the primary rRNA binding proteins, it binds directly near the 3'-end of the 23S rRNA, where it nucleates assembly of the 50S subunit. This chain is Large ribosomal subunit protein uL3, found in Xylella fastidiosa (strain M12).